Here is a 247-residue protein sequence, read N- to C-terminus: Adenosylcobinamide-GDP ribazoletransferase (247 aa).

6 helical membrane passes run 31–51, 57–77, 109–129, 136–156, 189–209, and 218–238; these read VVWFPAAGLVVGAAVALAAAL, PWLGALAGVVMWAWITGGLHL, FGVIVLVLQLAAKLVLLHWLL, PALVLIPAWTRWAAAGWTLLL, ITPIAFVALIPAVLWGVWMWL, and ILGAGIEWSESAALLLAGVSL.

The protein belongs to the CobS family. Requires Mg(2+) as cofactor.

Its subcellular location is the cell inner membrane. The catalysed reaction is alpha-ribazole + adenosylcob(III)inamide-GDP = adenosylcob(III)alamin + GMP + H(+). It catalyses the reaction alpha-ribazole 5'-phosphate + adenosylcob(III)inamide-GDP = adenosylcob(III)alamin 5'-phosphate + GMP + H(+). The protein operates within cofactor biosynthesis; adenosylcobalamin biosynthesis; adenosylcobalamin from cob(II)yrinate a,c-diamide: step 7/7. Its function is as follows. Joins adenosylcobinamide-GDP and alpha-ribazole to generate adenosylcobalamin (Ado-cobalamin). Also synthesizes adenosylcobalamin 5'-phosphate from adenosylcobinamide-GDP and alpha-ribazole 5'-phosphate. The protein is Adenosylcobinamide-GDP ribazoletransferase of Thiobacillus denitrificans (strain ATCC 25259 / T1).